We begin with the raw amino-acid sequence, 318 residues long: tRNA uridine(34) hydroxylase (318 aa).

Residues 123-217 enclose the Rhodanese domain; it reads EDDDTVIIDA…YGKDPETKGQ (95 aa). Cysteine 177 functions as the Cysteine persulfide intermediate in the catalytic mechanism.

This sequence belongs to the TrhO family.

The catalysed reaction is uridine(34) in tRNA + AH2 + O2 = 5-hydroxyuridine(34) in tRNA + A + H2O. Catalyzes oxygen-dependent 5-hydroxyuridine (ho5U) modification at position 34 in tRNAs. This is tRNA uridine(34) hydroxylase from Staphylococcus aureus (strain Mu3 / ATCC 700698).